The sequence spans 1093 residues: MEASAGLVAGSHNRNELVVIRRDGDPGPKPLRQQNGQVCQICGDDVGLNPDGEPFVACNECAFPVCRDCYEYERREGTQNCPQCKTRFKRLRGCARVPGDEEEDGVDDLENEFNWRDRNDSQYVAESMLHAHMSYGRGGVDVNGVPQPFQPNPNVPLLTDGQMVDDIPPEQHALVPSFMGGGGKRIHPLPYADPNLPVQPRSMDPSKDLAAYGYGSVAWKERMESWKQKQERLHQMRNDGGGKDWDGDGDDGDLPLMDEARQPLSRKVPIPSSQINPYRMVIIIRLVVLGFFFHYRVMHPVPDAFALWLISVICEIWFAMSWILDQFPKWFPIERETYLDRLTLRFDKEGQTSQLAPIDFFVSTVDPLKEPPLVTANTVLSILAVDYPVDKVSCYVSDDGAAMLTFEALSETSEFAKKWVPFCKKYSIEPRAPEWYFQQKIDYLKDKVAPYFVRERRAMKREYEEFKVRINALVAKAQKVPEEGWTMQDGTPWPGNNVRDHPGMIQVFLGQSGGHDIEGNELPRLVYVSREKRPGYNHHKKAGAMNALVRVSAVLTNAPYMLNLDCDHYINNSKAIKEAMCFMMDPLVGKKVCYVQFPQRFDGIDRHDRYANRNVVFFDINMKGLDGIQGPIYVGTGCVFRRQALYGYDAPKTKKPPSRTCNCWPKWCICCCCFGDRKSKKKTTKPKTEKKKRSFFKRAENQSPAYALGEIEEGAPGAENEKAGIVNQQKLEKKFGQSSVFVASTLLENGGTLKSASPASLLKEAIHVISCGYEDKTDWGKEIGWIYGSVTEDILTGFKMHCHGWRSIYCIPKLPAFKGSAPLNLSDRLHQVLRWALGSVEIFFSNHCPLWYGYGGGLKCLERFSYINSIVYPFTSIPLLAYCTLPAICLLTGKFITPELTNVASLWFMSLFICIFATGILEMRWSGVGIDDWWRNEQFWVIGGVSSHLFALFQGLLKVIAGIDTSFTVTSKGGDDEEFSELYTFKWTTLLIPPTTLLLLNFIGVVAGVSNAINNGYESWGPLFGKLFFAFWVIVHLYPFLKGLVGRQNRTPTIVIVWSILLASIFSLLWVRIDPFLAKNDGPLLEECGLDCN.

The Cytoplasmic portion of the chain corresponds to M1–M280. Zn(2+)-binding residues include C39, C42, C58, C61, C66, C69, C81, and C84. The RING-type; degenerate zinc-finger motif lies at C39–K85. Basic and acidic residues predominate over residues L233–D246. The disordered stretch occupies residues L233–M257. A helical transmembrane segment spans residues V281 to V301. At P302 to D303 the chain is on the extracellular side. The chain crosses the membrane as a helical span at residues A304–L324. Residues D325–S869 lie on the Cytoplasmic side of the membrane. 4 residues coordinate UDP-alpha-D-glucose: S363, K369, E370, and D399. D399 is a catalytic residue. The stretch at V453 to V480 forms a coiled coil. K540 contributes to the UDP-alpha-D-glucose binding site. Residues K541 and D565 each contribute to the Mn(2+) site. Residue D793 is part of the active site. A helical membrane pass occupies residues I870 to L890. At L891–N902 the chain is on the extracellular side. Residues V903 to M923 traverse the membrane as a helical segment. The Cytoplasmic portion of the chain corresponds to R924–F939. The chain crosses the membrane as a helical span at residues W940–I960. The Extracellular portion of the chain corresponds to A961–T988. Residues T989–V1009 form a helical membrane-spanning segment. Over S1010–W1020 the chain is Cytoplasmic. The helical transmembrane segment at G1021–L1041 threads the bilayer. The Extracellular portion of the chain corresponds to K1042–R1050. The helical transmembrane segment at T1051 to V1071 threads the bilayer. At R1072 to N1093 the chain is on the cytoplasmic side.

The protein belongs to the glycosyltransferase 2 family. Plant cellulose synthase subfamily. Mn(2+) serves as cofactor. It depends on Zn(2+) as a cofactor.

Its subcellular location is the cell membrane. The catalysed reaction is [(1-&gt;4)-beta-D-glucosyl](n) + UDP-alpha-D-glucose = [(1-&gt;4)-beta-D-glucosyl](n+1) + UDP + H(+). It participates in glycan metabolism; plant cellulose biosynthesis. In terms of biological role, probable catalytic subunit of cellulose synthase terminal complexes ('rosettes'), required for beta-1,4-glucan microfibril crystallization, a major mechanism of the cell wall formation. The sequence is that of Probable cellulose synthase A catalytic subunit 3 [UDP-forming] (CESA3) from Oryza sativa subsp. japonica (Rice).